The chain runs to 124 residues: Bactoprenol-linked glucose translocase (124 aa).

The next 4 membrane-spanning stretches (helical) occupy residues 12–32 (FFSY…VFYA), 45–65 (NIVG…RCSF), 75–95 (FIFI…FDLL), and 96–116 (ALSP…LGYC).

Belongs to the GtrA family.

It localises to the cell membrane. It participates in bacterial outer membrane biogenesis; lipopolysaccharide biosynthesis. In terms of biological role, involved in O antigen modification. Involved in the translocation of bactoprenol-linked glucose across the cytoplasmic membrane. The polypeptide is Bactoprenol-linked glucose translocase (rfbI) (Shigella flexneri).